The following is a 241-amino-acid chain: uncharacterized protein (241 aa).

5 helical membrane passes run 7–27, 37–57, 72–92, 110–130, and 138–158; these read LIFL…WSVF, LFLL…LLLI, IIAL…SGFG, INLV…YVAF, and FGTL…IKII.

The protein localises to the cell membrane. This is an uncharacterized protein from Methanocaldococcus jannaschii (strain ATCC 43067 / DSM 2661 / JAL-1 / JCM 10045 / NBRC 100440) (Methanococcus jannaschii).